The chain runs to 245 residues: MKAKVIDAVSFSYILRTVGDFLSEANFIVTKEGIRVSGIDPSRVVFLDIFLPSSYFEGFEVSQEKEIIGFKLEDVNDILKRVLKDDTLILSSNESKLTLTFDGEFTRSFELPLIQVESTQPPSVNLEFPFKAQLLTITFADIIDELSDLGEVLNIHSKENKLYFEVIGDLSTAKVELSTDNGTLLEASGADVSSSYGMEYVANTTKMRRASDSMELYFGSQIPLKLRFKLPQEGYGDFYIAPRAD.

The protein belongs to the PCNA family. As to quaternary structure, forms homodimers with PCNA1, which then recruit PCNA3; does not form homotrimers. The heterodimers interact with RfcS homotetramers. Heterotrimer which circularizes head-to-tail (head is at N-terminus, tail is at C-terminus) to form a toroid; DNA passes through its center. Replication factor C (RFC) is required to load the toroid on the DNA. This subunit interacts with DNA polymerase I (dpo1). The heterotrimer also interacts with flap endonuclease 1, DNA ligase and XPF via the other subunits.

Its function is as follows. One of the sliding clamp subunits that acts as a moving platform for DNA processing. Responsible for tethering the catalytic subunit of DNA polymerase to DNA during high-speed replication. Heterotrimer stimulates the Holliday junction resolvase Hjc. DNA polymerase I, DNA ligase and the flap endonuclease may be constitutively associated with the PCNA heterotrimer forming a scanning complex able to couple DNA synthesis and Okazaki fragment maturation. The chain is DNA polymerase sliding clamp 2 from Saccharolobus solfataricus (strain ATCC 35092 / DSM 1617 / JCM 11322 / P2) (Sulfolobus solfataricus).